The primary structure comprises 208 residues: Small ribosomal subunit protein uS4 (208 aa).

An S4 RNA-binding domain is found at 98 to 160; it reads CRLDNVVYRM…AKKQSRIQLA (63 aa).

It belongs to the universal ribosomal protein uS4 family. In terms of assembly, part of the 30S ribosomal subunit. Contacts protein S5. The interaction surface between S4 and S5 is involved in control of translational fidelity.

Functionally, one of the primary rRNA binding proteins, it binds directly to 16S rRNA where it nucleates assembly of the body of the 30S subunit. In terms of biological role, with S5 and S12 plays an important role in translational accuracy. The protein is Small ribosomal subunit protein uS4 of Ruthia magnifica subsp. Calyptogena magnifica.